A 348-amino-acid chain; its full sequence is Selenide, water dikinase (348 aa).

Residue Sec-17 is part of the active site. Position 17 (Sec-17) is a non-standard amino acid, selenocysteine. Residues Lys-20 and 48–50 each bind ATP; that span reads TAD. Residue Asp-51 participates in Mg(2+) binding. Residues Asp-68, Asp-91, and 138 to 140 contribute to the ATP site; that span reads GHT. Asp-91 is a binding site for Mg(2+). Asp-226 is a binding site for Mg(2+).

It belongs to the selenophosphate synthase 1 family. Class I subfamily. As to quaternary structure, homodimer. Requires Mg(2+) as cofactor.

The catalysed reaction is hydrogenselenide + ATP + H2O = selenophosphate + AMP + phosphate + 2 H(+). Synthesizes selenophosphate from selenide and ATP. The chain is Selenide, water dikinase from Clostridioides difficile (strain 630) (Peptoclostridium difficile).